A 284-amino-acid polypeptide reads, in one-letter code: Tropomyosin (284 aa).

The disordered stretch occupies residues 1–47 (MDAIKKKMQAMKIEKDNAMDRADAAEEKARQQQERVEKLEEELRDTQ). A coiled-coil region spans residues 1–284 (MDAIKKKMQA…DQTFQELSGY (284 aa)). The span at 12 to 38 (KIEKDNAMDRADAAEEKARQQQERVEK) shows a compositional bias: basic and acidic residues.

Belongs to the tropomyosin family. As to quaternary structure, homodimer.

In terms of biological role, tropomyosin, in association with the troponin complex, plays a central role in the calcium dependent regulation of muscle contraction. In Trichinella pseudospiralis (Parasitic roundworm), this protein is Tropomyosin.